A 104-amino-acid polypeptide reads, in one-letter code: ATP-dependent Clp protease adapter protein ClpS (104 aa).

Residues 1 to 20 (MAEETPTRSPGGAAVLDKAP) are disordered.

It belongs to the ClpS family. As to quaternary structure, binds to the N-terminal domain of the chaperone ClpA.

In terms of biological role, involved in the modulation of the specificity of the ClpAP-mediated ATP-dependent protein degradation. This chain is ATP-dependent Clp protease adapter protein ClpS, found in Synechococcus sp. (strain CC9902).